Here is a 408-residue protein sequence, read N- to C-terminus: Multidrug resistance protein MdtG (408 aa).

11 consecutive transmembrane segments (helical) span residues 16-36 (LIVA…VMPF), 58-78 (IVFS…GGLA), 92-112 (LGMG…QFLI), 115-135 (ALLG…ATQV), 146-166 (TLST…GLLA), 173-193 (PVFF…LFCI), 224-244 (LFVT…ILTL), 256-276 (VAFI…LSAP), 290-310 (ILIT…YVQT), 319-339 (FLLG…LVYN), and 378-398 (AVFL…WNSL).

It belongs to the major facilitator superfamily. DHA1 family. MdtG (TC 2.A.1.2.20) subfamily.

It is found in the cell inner membrane. Its function is as follows. Confers resistance to fosfomycin and deoxycholate. This Escherichia coli O127:H6 (strain E2348/69 / EPEC) protein is Multidrug resistance protein MdtG.